The primary structure comprises 808 residues: Probable inorganic carbon transporter subunit DabA (808 aa).

C334, D336, H494, and C509 together coordinate Zn(2+).

This sequence belongs to the inorganic carbon transporter (TC 9.A.2) DabA family. As to quaternary structure, forms a complex with DabB. Requires Zn(2+) as cofactor.

The protein localises to the cell inner membrane. Part of an energy-coupled inorganic carbon pump. In Rhodopseudomonas palustris (strain BisB5), this protein is Probable inorganic carbon transporter subunit DabA.